A 155-amino-acid chain; its full sequence is Gas vesicle protein K (155 aa).

The protein belongs to the gas vesicle GvpK family.

The protein resides in the gas vesicle. Might be involved in nucleating gas vesicle formation. Gas vesicles (GV) are hollow, gas filled proteinaceous nanostructures. During planktonic growth they allow positioning of the organism at a favorable depth for light or nutrient acquisition. In terms of biological role, cluster expression in E.coli (gvpA1-gvpA2-gvpC-gvpN-gvpJ-gvpK-gvpF-gvpG-gvpV-gvpW) allows cells to float and produces irregularly shaped gas vesicles. The polypeptide is Gas vesicle protein K (Nostoc sp. (strain PCC 7120 / SAG 25.82 / UTEX 2576)).